The primary structure comprises 436 residues: T-box transcription factor TBX6 (436 aa).

Positions 100–273 form a DNA-binding region, T-box; sequence LWKEFSSVGT…ANPFAKGFRE (174 aa). Residues 274 to 284 show a composition bias toward basic and acidic residues; the sequence is NGRNCKRERDA. Disordered regions lie at residues 274 to 339 and 360 to 379; these read NGRN…APAP and PSHL…SGRS. Residues 325 to 339 show a composition bias toward low complexity; the sequence is EQAPAPGEATAAPAP.

As to quaternary structure, forms a dimeric complex with DNA (in vitro).

Its subcellular location is the nucleus. Functionally, T-box transcription factor that plays an essential role in the determination of the fate of axial stem cells: neural vs mesodermal. Acts in part by down-regulating, a specific enhancer (N1) of SOX2, to inhibit neural development. Seems to play also an essential role in left/right axis determination and acts through effects on Notch signaling around the node as well as through an effect on the morphology and motility of the nodal cilia. The polypeptide is T-box transcription factor TBX6 (TBX6) (Gorilla gorilla gorilla (Western lowland gorilla)).